We begin with the raw amino-acid sequence, 179 residues long: NAD(P)H-quinone oxidoreductase subunit J (179 aa).

It belongs to the complex I 30 kDa subunit family. In terms of assembly, NDH-1 can be composed of about 15 different subunits; different subcomplexes with different compositions have been identified which probably have different functions. Post-translationally, in at one experiment the initiator methionine has been seen to be kept and removed.

Its subcellular location is the cellular thylakoid membrane. The catalysed reaction is a plastoquinone + NADH + (n+1) H(+)(in) = a plastoquinol + NAD(+) + n H(+)(out). It catalyses the reaction a plastoquinone + NADPH + (n+1) H(+)(in) = a plastoquinol + NADP(+) + n H(+)(out). In terms of biological role, NDH-1 shuttles electrons from an unknown electron donor, via FMN and iron-sulfur (Fe-S) centers, to quinones in the respiratory and/or the photosynthetic chain. The immediate electron acceptor for the enzyme in this species is believed to be plastoquinone. Couples the redox reaction to proton translocation, and thus conserves the redox energy in a proton gradient. Cyanobacterial NDH-1 also plays a role in inorganic carbon-concentration. This Synechocystis sp. (strain ATCC 27184 / PCC 6803 / Kazusa) protein is NAD(P)H-quinone oxidoreductase subunit J.